We begin with the raw amino-acid sequence, 464 residues long: Siroheme synthase (464 aa).

A precorrin-2 dehydrogenase /sirohydrochlorin ferrochelatase region spans residues 1–203 (MEFLPLFHNL…GQGAEAERLL (203 aa)). NAD(+) is bound by residues 22 to 23 (EI) and 43 to 44 (PE). Ser128 bears the Phosphoserine mark. The uroporphyrinogen-III C-methyltransferase stretch occupies residues 216-464 (GEVYLVGAGP…AWFEGAQATV (249 aa)). Pro225 is a binding site for S-adenosyl-L-methionine. Residue Asp248 is the Proton acceptor of the active site. Lys270 serves as the catalytic Proton donor. S-adenosyl-L-methionine contacts are provided by residues 301–303 (GGD), Ile306, 331–332 (TA), Met383, and Gly412.

This sequence in the N-terminal section; belongs to the precorrin-2 dehydrogenase / sirohydrochlorin ferrochelatase family. In the C-terminal section; belongs to the precorrin methyltransferase family.

It carries out the reaction uroporphyrinogen III + 2 S-adenosyl-L-methionine = precorrin-2 + 2 S-adenosyl-L-homocysteine + H(+). The catalysed reaction is precorrin-2 + NAD(+) = sirohydrochlorin + NADH + 2 H(+). The enzyme catalyses siroheme + 2 H(+) = sirohydrochlorin + Fe(2+). The protein operates within cofactor biosynthesis; adenosylcobalamin biosynthesis; precorrin-2 from uroporphyrinogen III: step 1/1. It participates in cofactor biosynthesis; adenosylcobalamin biosynthesis; sirohydrochlorin from precorrin-2: step 1/1. It functions in the pathway porphyrin-containing compound metabolism; siroheme biosynthesis; precorrin-2 from uroporphyrinogen III: step 1/1. Its pathway is porphyrin-containing compound metabolism; siroheme biosynthesis; siroheme from sirohydrochlorin: step 1/1. The protein operates within porphyrin-containing compound metabolism; siroheme biosynthesis; sirohydrochlorin from precorrin-2: step 1/1. Its function is as follows. Multifunctional enzyme that catalyzes the SAM-dependent methylations of uroporphyrinogen III at position C-2 and C-7 to form precorrin-2 via precorrin-1. Then it catalyzes the NAD-dependent ring dehydrogenation of precorrin-2 to yield sirohydrochlorin. Finally, it catalyzes the ferrochelation of sirohydrochlorin to yield siroheme. The protein is Siroheme synthase of Pseudomonas savastanoi pv. phaseolicola (strain 1448A / Race 6) (Pseudomonas syringae pv. phaseolicola (strain 1448A / Race 6)).